The sequence spans 324 residues: Putative arsenical pump-driving ATPase (324 aa).

ATP is bound at residue 21–28; sequence GKGGVGKT.

This sequence belongs to the arsA ATPase family.

The enzyme catalyses arsenite(in) + ATP + H2O = arsenite(out) + ADP + phosphate + H(+). Functionally, anion-transporting ATPase. Catalyzes the extrusion of arsenite. This is Putative arsenical pump-driving ATPase from Methanothermobacter thermautotrophicus (strain ATCC 29096 / DSM 1053 / JCM 10044 / NBRC 100330 / Delta H) (Methanobacterium thermoautotrophicum).